The following is a 76-amino-acid chain: Acyl carrier protein (76 aa).

The Carrier domain maps to 1–76 (MALLDDVKAV…DAIKYIENNA (76 aa)). At Ser36 the chain carries O-(pantetheine 4'-phosphoryl)serine.

It belongs to the acyl carrier protein (ACP) family. Post-translationally, 4'-phosphopantetheine is transferred from CoA to a specific serine of apo-ACP by AcpS. This modification is essential for activity because fatty acids are bound in thioester linkage to the sulfhydryl of the prosthetic group.

It localises to the cytoplasm. It participates in lipid metabolism; fatty acid biosynthesis. In terms of biological role, carrier of the growing fatty acid chain in fatty acid biosynthesis. This Aliarcobacter butzleri (strain RM4018) (Arcobacter butzleri) protein is Acyl carrier protein.